A 279-amino-acid polypeptide reads, in one-letter code: Acetyl-coenzyme A carboxylase carboxyl transferase subunit beta (279 aa).

The 257-residue stretch at 23–279 (LWWKCEECGA…LVTLFSMLKV (257 aa)) folds into the CoA carboxyltransferase N-terminal domain. Zn(2+)-binding residues include cysteine 27, cysteine 30, cysteine 46, and cysteine 49. Residues 27–49 (CEECGAMLHKKQFEDHFFTCAEC) form a C4-type zinc finger.

It belongs to the AccD/PCCB family. Acetyl-CoA carboxylase is a heterohexamer composed of biotin carboxyl carrier protein (AccB), biotin carboxylase (AccC) and two subunits each of ACCase subunit alpha (AccA) and ACCase subunit beta (AccD). It depends on Zn(2+) as a cofactor.

It is found in the cytoplasm. The catalysed reaction is N(6)-carboxybiotinyl-L-lysyl-[protein] + acetyl-CoA = N(6)-biotinyl-L-lysyl-[protein] + malonyl-CoA. It functions in the pathway lipid metabolism; malonyl-CoA biosynthesis; malonyl-CoA from acetyl-CoA: step 1/1. Functionally, component of the acetyl coenzyme A carboxylase (ACC) complex. Biotin carboxylase (BC) catalyzes the carboxylation of biotin on its carrier protein (BCCP) and then the CO(2) group is transferred by the transcarboxylase to acetyl-CoA to form malonyl-CoA. In Pelodictyon phaeoclathratiforme (strain DSM 5477 / BU-1), this protein is Acetyl-coenzyme A carboxylase carboxyl transferase subunit beta.